We begin with the raw amino-acid sequence, 320 residues long: Polyprenyl transferase pyr6 (320 aa).

6 helical membrane-spanning segments follow: residues K22–S42, G60–I80, L101–M121, G127–G147, L155–W175, and P186–F206. An N-linked (GlcNAc...) asparagine glycan is attached at N224. Residues Y233–L253 form a helical membrane-spanning segment. An N-linked (GlcNAc...) asparagine glycan is attached at N256. Transmembrane regions (helical) follow at residues W260–F280 and F296–S316.

It belongs to the UbiA prenyltransferase family. Requires Mg(2+) as cofactor.

It localises to the membrane. It catalyses the reaction 4-hydroxy-6-(pyridin-3-yl)-2H-pyran-2-one + (2E,6E)-farnesyl diphosphate = 4-hydroxy-3-[(2E,6E)-farnesyl]-6-(pyridin-3-yl)-2H-pyran-2-one + diphosphate. The protein operates within secondary metabolite biosynthesis; terpenoid biosynthesis. Functionally, polyprenyl transferase; part of the gene cluster that mediates the biosynthesis of pyripyropene A, a specific human acyl-coenzyme A:cholesterol acyltransferase 2 inhibitor. The first step of the pathway is the synthesis of nicotinyl-CoA from nicotinic acid by the nicotinic acid-CoA ligase pyr1. Nicotinyl-CoA is then a substrate of polyketide synthase pyr2 to produce 4-hydroxy-6-(3-pyridinyl)-2H-pyran-2-one (HPPO) which is further prenylated by the polyprenyl transferase pyr6 to yield farnesyl-HPPO. The next steps consist of an epoxidation of farnesyl-HPPO to epoxyfarnesyl-HPPO by FAD-dependent monooxygenase pyr5 and a cyclization of the terpenoid portion by the terpene cyclase pyr4 to yield deacetyl-pyripyropene E. The 2 cytochrome P450 monooxygenases pyr3 and pyr9, and the 2 acetyltransferases pyr7 and pyr8 are involved in the conversion of deacetyl-pyripyropene E into pyripyropene A through several cycles of oxidation and acetylation steps. Pyr7 acetylates deacetyl-pyripyropene E to pyripyropene E which is oxidized to 11-deacetyl-pyripyropene O by pyr3, which is in turn acetylated into pyripyropene O by pyr8. Pyripyropene O is then oxidized to deacetyl-pyripyropene A by pyr9. Deacetyl-pyripyropene A is finally acetylated to pyripyropene A by pyr8. This chain is Polyprenyl transferase pyr6, found in Aspergillus fumigatus (strain ATCC MYA-4609 / CBS 101355 / FGSC A1100 / Af293) (Neosartorya fumigata).